The sequence spans 231 residues: Small ribosomal subunit protein uS3 (231 aa).

The KH type-2 domain occupies 39-107; it reads IRELLHKELK…DVVINIVEIR (69 aa).

This sequence belongs to the universal ribosomal protein uS3 family. In terms of assembly, part of the 30S ribosomal subunit. Forms a tight complex with proteins S10 and S14.

In terms of biological role, binds the lower part of the 30S subunit head. Binds mRNA in the 70S ribosome, positioning it for translation. The sequence is that of Small ribosomal subunit protein uS3 from Nitrobacter hamburgensis (strain DSM 10229 / NCIMB 13809 / X14).